A 274-amino-acid polypeptide reads, in one-letter code: Shikimate dehydrogenase (NADP(+)) (274 aa).

Shikimate is bound by residues 14-16 and Thr-61; that span reads SKS. Catalysis depends on Lys-65, which acts as the Proton acceptor. Residues Asn-86 and Asp-102 each coordinate shikimate. NADP(+) contacts are provided by residues 126-130, 150-155, and Met-214; these read GAGGA and NRTAEK. Shikimate is bound at residue Tyr-216. Gly-239 contacts NADP(+).

Belongs to the shikimate dehydrogenase family. In terms of assembly, homodimer.

The enzyme catalyses shikimate + NADP(+) = 3-dehydroshikimate + NADPH + H(+). It participates in metabolic intermediate biosynthesis; chorismate biosynthesis; chorismate from D-erythrose 4-phosphate and phosphoenolpyruvate: step 4/7. Involved in the biosynthesis of the chorismate, which leads to the biosynthesis of aromatic amino acids. Catalyzes the reversible NADPH linked reduction of 3-dehydroshikimate (DHSA) to yield shikimate (SA). This is Shikimate dehydrogenase (NADP(+)) from Pseudoalteromonas translucida (strain TAC 125).